Consider the following 463-residue polypeptide: Glucagon-like peptide 1 receptor (463 aa).

The N-terminal stretch at 1-21 (MAVTPSLLRLALLLLGAVGRA) is a signal peptide. The Extracellular segment spans residues 22 to 139 (GPRPQGATVS…KQGERNSPEE (118 aa)). 3 disulfides stabilise this stretch: cysteine 46-cysteine 71, cysteine 62-cysteine 104, and cysteine 85-cysteine 126. N-linked (GlcNAc...) asparagine glycans are attached at residues asparagine 63, asparagine 82, and asparagine 115. Residues 140 to 164 (QLLSLYIIYTVGYALSFSALVIASA) traverse the membrane as a helical segment. Over 165–175 (ILVSFRHLHCT) the chain is Cytoplasmic. Residues 176 to 201 (RNYIHLNLFASFILRALSVFIKDAAL) traverse the membrane as a helical segment. At 202–227 (KWMYSTAAQQHQWDGLLSYQDSLGCR) the chain is on the extracellular side. Cysteine 226 and cysteine 296 are disulfide-bonded. Residues 228-251 (LVFLLMQYCVAANYYWLLVEGVYL) form a helical membrane-spanning segment. The Cytoplasmic segment spans residues 252-265 (YTLLAFSVFSEQRI). Residues 266–290 (FKLYLSIGWGVPLLFVIPWGIVKYL) form a helical membrane-spanning segment. Topologically, residues 291 to 305 (YEDEGCWTRNSNMNY) are extracellular. A helical transmembrane segment spans residues 306–328 (WLIIRLPILFAIGVNFLVFIRVI). Topologically, residues 329–348 (CIVIAKLKANLMCKTDIKCR) are cytoplasmic. Cysteine 341 carries the ADP-ribosylcysteine modification. Residue arginine 348 is modified to ADP-ribosylarginine. A helical membrane pass occupies residues 349–370 (LAKSTLTLIPLLGTHEVIFAFV). The segment at 352–355 (STLT) is important for allosteric inhibitor binding. Over 371-383 (MDEHARGTLRFVK) the chain is Extracellular. A helical transmembrane segment spans residues 384–404 (LFTELSFTSFQGFMVAVLYCF). Residues 405–463 (VNNEVQMEFRKSWERWRLERLNIQRDSSMKPLKCPTSSVSSGATVGSSVYAATCQNSCS) lie on the Cytoplasmic side of the membrane.

The protein belongs to the G-protein coupled receptor 2 family. May form homodimers and heterodimers with GIPR. Post-translationally, N-glycosylation enhances cell surface expression and lengthens receptor half-life by preventing degradation in the ER. Pancreatic islets, stomach, lung, rat insulinoma cell line.

It is found in the cell membrane. In terms of biological role, G-protein coupled receptor for glucagon-like peptide 1 (GLP-1). Ligand binding triggers activation of a signaling cascade that leads to the activation of adenylyl cyclase and increased intracellular cAMP levels. Plays a role in regulating insulin secretion in response to GLP-1. This Rattus norvegicus (Rat) protein is Glucagon-like peptide 1 receptor (Glp1r).